We begin with the raw amino-acid sequence, 82 residues long: Exodeoxyribonuclease 7 small subunit (82 aa).

This sequence belongs to the XseB family. As to quaternary structure, heterooligomer composed of large and small subunits.

Its subcellular location is the cytoplasm. It carries out the reaction Exonucleolytic cleavage in either 5'- to 3'- or 3'- to 5'-direction to yield nucleoside 5'-phosphates.. In terms of biological role, bidirectionally degrades single-stranded DNA into large acid-insoluble oligonucleotides, which are then degraded further into small acid-soluble oligonucleotides. This Sodalis glossinidius (strain morsitans) protein is Exodeoxyribonuclease 7 small subunit.